Consider the following 549-residue polypeptide: Glucose-6-phosphate isomerase (549 aa).

Residue E355 is the Proton donor of the active site. Catalysis depends on residues H387 and K515.

It belongs to the GPI family.

It localises to the cytoplasm. It carries out the reaction alpha-D-glucose 6-phosphate = beta-D-fructose 6-phosphate. Its pathway is carbohydrate biosynthesis; gluconeogenesis. It participates in carbohydrate degradation; glycolysis; D-glyceraldehyde 3-phosphate and glycerone phosphate from D-glucose: step 2/4. Functionally, catalyzes the reversible isomerization of glucose-6-phosphate to fructose-6-phosphate. The sequence is that of Glucose-6-phosphate isomerase from Haemophilus influenzae (strain PittEE).